The primary structure comprises 210 residues: MLMFSRFRYIFFAVALLSGPVCAGARADLSAFTRGLKTLQGHFSQEVIDTQGRVKERSNGTVALSLPNLLRWECDAPYKQLVVADGKRVWLFDPDLNQASVLLQDNEERNSPLIALIDPIQLDRKYDVSEEVAMRDGLRWLSLRPRGSTEASFQSASFGFSQTQLARMELVDNLGQRTVIAFSGWQRNPVFAVNTFRFTPGKNVDVIGDR.

An N-terminal signal peptide occupies residues 1 to 23 (MLMFSRFRYIFFAVALLSGPVCA).

It belongs to the LolA family. Monomer.

The protein resides in the periplasm. In terms of biological role, participates in the translocation of lipoproteins from the inner membrane to the outer membrane. Only forms a complex with a lipoprotein if the residue after the N-terminal Cys is not an aspartate (The Asp acts as a targeting signal to indicate that the lipoprotein should stay in the inner membrane). The protein is Outer-membrane lipoprotein carrier protein of Xylella fastidiosa (strain Temecula1 / ATCC 700964).